The sequence spans 706 residues: Translation factor GUF1 homolog, mitochondrial (706 aa).

The tr-type G domain occupies 89 to 272 (SRIRNFSIIA…SIVKNVPPPQ (184 aa)). GTP is bound by residues 98-105 (AHIDHGKS), 165-169 (DTPGH), and 219-222 (NKID).

It belongs to the TRAFAC class translation factor GTPase superfamily. Classic translation factor GTPase family. LepA subfamily.

It localises to the mitochondrion inner membrane. It catalyses the reaction GTP + H2O = GDP + phosphate + H(+). Functionally, promotes mitochondrial protein synthesis. May act as a fidelity factor of the translation reaction, by catalyzing a one-codon backward translocation of tRNAs on improperly translocated ribosomes. Binds to mitochondrial ribosomes in a GTP-dependent manner. The chain is Translation factor GUF1 homolog, mitochondrial from Thalassiosira pseudonana (Marine diatom).